The primary structure comprises 488 residues: MQESQDTHMSSHLDEVVAAVSVTSKNRIPNKLLQTALFQPPREKLHLCEERAKSYSSSREYKQAIQELVRCVALTRICYGDWHWKLAEAYVNLAQGYLQLKGLSLQAKQHAEKAKEILANSIESPCHNKTDIFKCSLELFYTLGRALLSLQKFKDASENLIKAERLSKEMLQCGNIVKEEWIEIQSRIKLSFAQLYQGQKRSKEAFPFYQKALEYTEITKDEKSLECVQVLRELAGVEQALGLYAAAISHFSRDRLPTPQPCPLGHKCCCPSPFLSPVLNVTWRPFYSSQVDEEEAHLIILSKDPSPEEAADSAHFIARAAAASGMHDHRDVAEKYFQESMTSIKDSEGAERAKFLSIQDEFCSFLQTTGQKERAAMILRESLEAKVGAFGDFSPEVAETYRALGRADLAQGNNSGAYAKLKKCVQIETFLYGSQDKKTLATQHTIDTLSKISEAAGKSRQSVKAKVAFCTSAPQYGMPGKGRHSVAD.

TPR repeat units lie at residues 45–78 (LHLCEERAKSYSSSREYKQAIQELVRCVALTRIC), 137–170 (LELFYTLGRALLSLQKFKDASENLIKAERLSKEM), 186–219 (SRIKLSFAQLYQGQKRSKEAFPFYQKALEYTEIT), 228–261 (VQVLRELAGVEQALGLYAAAISHFSRDRLPTPQP), and 398–431 (AETYRALGRADLAQGNNSGAYAKLKKCVQIETFL).

Associated with the EvC complex composed of EFCAB7, IQCE, EVC2 and EVC.

It localises to the cell projection. The protein localises to the cilium. Functionally, participates positively in the ciliary Hedgehog (Hh) signaling. This Mus musculus (Mouse) protein is Tetratricopeptide repeat protein 23 (Ttc23).